Reading from the N-terminus, the 553-residue chain is Putative transport protein YidE (553 aa).

The next 5 membrane-spanning stretches (helical) occupy residues 4-24 (IALT…IGNV), 28-48 (GVGL…HFVS), 65-85 (FGLI…FFAS), 95-115 (LFAV…HKLF), and 158-178 (MSYA…MWML). RCK C-terminal domains follow at residues 191-276 (QQHE…VIGQ) and 279-361 (DTSL…VLGN). Transmembrane regions (helical) follow at residues 371–391 (MLPV…PVFV), 393–413 (GFPA…ALIL), 439–459 (IVLF…HTLV), 464–484 (LSWI…VGIL), 493–513 (YLTM…LAFA), and 533–553 (LVMF…WSIG).

This sequence belongs to the AAE transporter (TC 2.A.81) family. YidE subfamily.

It is found in the cell membrane. This Escherichia coli O127:H6 (strain E2348/69 / EPEC) protein is Putative transport protein YidE.